We begin with the raw amino-acid sequence, 643 residues long: Pesticidal crystal protein Cry11Aa (643 aa).

It belongs to the delta endotoxin family.

Functionally, promotes colloidosmotic lysis by binding to the midgut epithelial cells of mosquitos. This Bacillus thuringiensis subsp. israelensis protein is Pesticidal crystal protein Cry11Aa (cry11Aa).